The sequence spans 146 residues: Large ribosomal subunit protein uL15 (146 aa).

A compositionally biased stretch (basic and acidic residues) spans 1 to 18 (MKLHELKPSEGSRKERNR). Residues 1-50 (MKLHELKPSEGSRKERNRVGRGTGSGNGKTSGRGHKGQKARSGGGVRLGF) are disordered. A compositionally biased stretch (gly residues) spans 21–31 (RGTGSGNGKTS).

The protein belongs to the universal ribosomal protein uL15 family. In terms of assembly, part of the 50S ribosomal subunit.

Binds to the 23S rRNA. This chain is Large ribosomal subunit protein uL15, found in Listeria welshimeri serovar 6b (strain ATCC 35897 / DSM 20650 / CCUG 15529 / CIP 8149 / NCTC 11857 / SLCC 5334 / V8).